A 137-amino-acid polypeptide reads, in one-letter code: Nucleoside diphosphate kinase (137 aa).

Positions 9, 57, 85, 91, 102, and 112 each coordinate ATP. His-115 acts as the Pros-phosphohistidine intermediate in catalysis.

This sequence belongs to the NDK family. In terms of assembly, homotetramer. Mg(2+) serves as cofactor.

It localises to the cytoplasm. It carries out the reaction a 2'-deoxyribonucleoside 5'-diphosphate + ATP = a 2'-deoxyribonucleoside 5'-triphosphate + ADP. It catalyses the reaction a ribonucleoside 5'-diphosphate + ATP = a ribonucleoside 5'-triphosphate + ADP. Functionally, major role in the synthesis of nucleoside triphosphates other than ATP. The ATP gamma phosphate is transferred to the NDP beta phosphate via a ping-pong mechanism, using a phosphorylated active-site intermediate. This is Nucleoside diphosphate kinase from Sulfurimonas denitrificans (strain ATCC 33889 / DSM 1251) (Thiomicrospira denitrificans (strain ATCC 33889 / DSM 1251)).